A 536-amino-acid chain; its full sequence is Protein GvpD1 (536 aa).

39–46 provides a ligand contact to ATP; sequence GAPGTGKT. Positions 352-413 are disordered; sequence GPSDSADRYD…SDQPHPIDED (62 aa). Residues 363 to 372 show a composition bias toward polar residues; the sequence is PDSTESFSEM. Positions 373–385 are enriched in low complexity; sequence ATTTPPDDAPTAT. Residues 386–396 are compositionally biased toward basic and acidic residues; the sequence is HETDGADDGSR.

Belongs to the gas vesicle GvpD family. As to quaternary structure, interacts with GvpE.

Its subcellular location is the cytoplasm. Its function is as follows. Causes a decrease in the amount of GvpE protein. The 5'-region of its promoter or mRNA has a repressive function on downstream genes. Gas vesicles are hollow, gas filled proteinaceous nanostructures found in several microbial planktonic microorganisms. They allow positioning of halobacteria at the optimal depth for growth in the poorly aerated, shallow brine pools of their habitat. Functionally, expression of a 9.5 kb p-vac DNA fragment containing 2 divergently transcribed regions (gvpD-gvpE-gvpF-gvpG-gvpH-gvpI-gvpJ-gvpK-gvpL-gvpM and gvpA-gvpC-gvpN-gvpO) allows H.volcanii to produce gas vesicles. A similar region restores gas vesicle production in H.halobium without the p-vac locus, but it still has the c-vac locus. The chain is Protein GvpD1 (gvpD11) from Halobacterium salinarum (strain ATCC 700922 / JCM 11081 / NRC-1) (Halobacterium halobium).